The sequence spans 689 residues: Glycine--tRNA ligase beta subunit (689 aa).

This sequence belongs to the class-II aminoacyl-tRNA synthetase family. As to quaternary structure, tetramer of two alpha and two beta subunits.

It is found in the cytoplasm. The enzyme catalyses tRNA(Gly) + glycine + ATP = glycyl-tRNA(Gly) + AMP + diphosphate. The chain is Glycine--tRNA ligase beta subunit from Shigella boydii serotype 18 (strain CDC 3083-94 / BS512).